Here is a 352-residue protein sequence, read N- to C-terminus: MQTLSSILRTIAPLDSKAMARATTRLDGLLKPQGSLGRLEQLAIQLAGMRGLYGHQVDRKQIIVMAADHGVYDEGVAISPRVVTMVQALNMVRGVTGVCVLAANAGAEVKIVDVGIDSDTLPGVIDMKVARGSGNIARGAAMTRQQAEDLLIASATLTLQQAAGGVKVFGVGELGMANTTPAAAMVSVFTDSDPELAVGIGANFPSEQLHHKVAVVRRAIETNQPDASDGIDVLAKVGGFDLVGMTGVMLGAAAAGLPVVLDGFLSYASALAACRIEAKVRDYLIPSHLSAEKGAVIALNHLQLEPYLQMGMRLGEGSGAALAMHLVDAACAMYNNMGSLAESNIELPGCVN.

The active-site Proton acceptor is the Glu-316.

Belongs to the CobT family.

The catalysed reaction is 5,6-dimethylbenzimidazole + nicotinate beta-D-ribonucleotide = alpha-ribazole 5'-phosphate + nicotinate + H(+). It functions in the pathway nucleoside biosynthesis; alpha-ribazole biosynthesis; alpha-ribazole from 5,6-dimethylbenzimidazole: step 1/2. Functionally, catalyzes the synthesis of alpha-ribazole-5'-phosphate from nicotinate mononucleotide (NAMN) and 5,6-dimethylbenzimidazole (DMB). The protein is Nicotinate-nucleotide--dimethylbenzimidazole phosphoribosyltransferase of Yersinia enterocolitica serotype O:8 / biotype 1B (strain NCTC 13174 / 8081).